Here is a 407-residue protein sequence, read N- to C-terminus: Nicotinate phosphoribosyltransferase (407 aa).

Position 228 is a phosphohistidine; by autocatalysis (His-228).

This sequence belongs to the NAPRTase family. Transiently phosphorylated on a His residue during the reaction cycle. Phosphorylation strongly increases the affinity for substrates and increases the rate of nicotinate D-ribonucleotide production. Dephosphorylation regenerates the low-affinity form of the enzyme, leading to product release.

The catalysed reaction is nicotinate + 5-phospho-alpha-D-ribose 1-diphosphate + ATP + H2O = nicotinate beta-D-ribonucleotide + ADP + phosphate + diphosphate. It functions in the pathway cofactor biosynthesis; NAD(+) biosynthesis; nicotinate D-ribonucleotide from nicotinate: step 1/1. 100-fold more active in the presence of saturating ATP. Functionally, catalyzes the synthesis of beta-nicotinate D-ribonucleotide from nicotinate and 5-phospho-D-ribose 1-phosphate at the expense of ATP. Functions in the deamidating salvage pathway for production of NAD from nicotinamide. Displays a strict preference for nicotinate over nicotinamide substrate. This chain is Nicotinate phosphoribosyltransferase, found in Acinetobacter baylyi (strain ATCC 33305 / BD413 / ADP1).